The sequence spans 264 residues: Hydroxyethylthiazole kinase (264 aa).

Met41 is a binding site for substrate. ATP-binding residues include Lys117 and Ser163. Position 190 (Gly190) interacts with substrate.

Belongs to the Thz kinase family. It depends on Mg(2+) as a cofactor.

The catalysed reaction is 5-(2-hydroxyethyl)-4-methylthiazole + ATP = 4-methyl-5-(2-phosphooxyethyl)-thiazole + ADP + H(+). It participates in cofactor biosynthesis; thiamine diphosphate biosynthesis; 4-methyl-5-(2-phosphoethyl)-thiazole from 5-(2-hydroxyethyl)-4-methylthiazole: step 1/1. Functionally, catalyzes the phosphorylation of the hydroxyl group of 4-methyl-5-beta-hydroxyethylthiazole (THZ). The chain is Hydroxyethylthiazole kinase from Thermoanaerobacter pseudethanolicus (strain ATCC 33223 / 39E) (Clostridium thermohydrosulfuricum).